Consider the following 243-residue polypeptide: 1-(5-phosphoribosyl)-5-[(5-phosphoribosylamino)methylideneamino] imidazole-4-carboxamide isomerase (243 aa).

The Proton acceptor role is filled by D8. The active-site Proton donor is the D129.

It belongs to the HisA/HisF family.

The protein resides in the cytoplasm. The enzyme catalyses 1-(5-phospho-beta-D-ribosyl)-5-[(5-phospho-beta-D-ribosylamino)methylideneamino]imidazole-4-carboxamide = 5-[(5-phospho-1-deoxy-D-ribulos-1-ylimino)methylamino]-1-(5-phospho-beta-D-ribosyl)imidazole-4-carboxamide. The protein operates within amino-acid biosynthesis; L-histidine biosynthesis; L-histidine from 5-phospho-alpha-D-ribose 1-diphosphate: step 4/9. This chain is 1-(5-phosphoribosyl)-5-[(5-phosphoribosylamino)methylideneamino] imidazole-4-carboxamide isomerase, found in Syntrophotalea carbinolica (strain DSM 2380 / NBRC 103641 / GraBd1) (Pelobacter carbinolicus).